A 474-amino-acid polypeptide reads, in one-letter code: PRAME family member 17 (474 aa).

The stretch at 97–124 (RWKLQVLDLRDVDGNFWTIWSGARALSC) is one LRR 1; degenerate repeat. The stretch at 179-203 (HLCCNKVQNYSMPTSSFRNLLKRVY) is one LRR 2; degenerate repeat. One copy of the LRR 3; degenerate repeat lies at 204–230 (PDSIQELEIKRKCSLNKTGKFAPYLSQ). Residues 231 to 265 (MSNLRKLFLAFGYDDELYVSGQQQFVPDLDCPFLC) form an LRR 4; degenerate repeat. LRR repeat units lie at residues 266 to 291 (LYYP…LRCL), 292 to 323 (KNPL…SQLK), 324 to 342 (ELHL…PLGA), 348 to 375 (AATL…ALSR), and 376 to 400 (CSQL…LLCH).

It belongs to the PRAME family.

In Homo sapiens (Human), this protein is PRAME family member 17.